The primary structure comprises 440 residues: D-serine dehydratase (440 aa).

Lys116 carries the post-translational modification N6-(pyridoxal phosphate)lysine.

Belongs to the serine/threonine dehydratase family. DsdA subfamily. In terms of assembly, monomer. The cofactor is pyridoxal 5'-phosphate.

The catalysed reaction is D-serine = pyruvate + NH4(+). The protein is D-serine dehydratase of Salmonella arizonae (strain ATCC BAA-731 / CDC346-86 / RSK2980).